Here is an 856-residue protein sequence, read N- to C-terminus: Phospholipase D gamma 2 (856 aa).

Residues 21–161 enclose the C2 domain; it reads PLATSSGSLM…CSGNRIEGLF (141 aa). Residue Asp-223 coordinates Ca(2+). One can recognise a PLD phosphodiesterase 1 domain in the interval 362–397; the sequence is TIYTHHQKTMIVDAEAAQNRRKIVAFVGGLDLCNGR. Residues His-367, Lys-369, and Asp-374 contribute to the active site. His-367 is a binding site for a 1,2-diacyl-sn-glycero-3-phosphate. Ca(2+) is bound by residues His-403 and His-435. 2 residues coordinate a 1,2-diacyl-sn-glycero-3-phosphate: Gln-562 and His-707. The PLD phosphodiesterase 2 domain maps to 702–729; it reads FMIYVHSKGMVVDDEFVLIGSANINQRS. Residues His-707, Lys-709, and Asp-714 contribute to the active site. Residue Glu-770 coordinates Ca(2+).

Belongs to the phospholipase D family. C2-PLD subfamily. Requires Ca(2+) as cofactor. Highly expressed in roots and flowers, moderately in stems, leaves and seedlings and low in siliques. Not detected in seeds.

Its subcellular location is the cytoplasm. The protein localises to the membrane. The catalysed reaction is a 1,2-diacyl-sn-glycero-3-phosphocholine + H2O = a 1,2-diacyl-sn-glycero-3-phosphate + choline + H(+). Inhibited by neomycin. In terms of biological role, hydrolyzes glycerol-phospholipids at the terminal phosphodiesteric bond to generate phosphatidic acids (PA). Plays an important role in various cellular processes, including phytohormone action, vesicular trafficking, secretion, cytoskeletal arrangement, meiosis, tumor promotion, pathogenesis, membrane deterioration and senescence. Can use phosphatidylserine but prefers ethanolamine-containing lipids as substrates. Can use phosphatidylcholine (PC) as substrates in the presence of phosphatidylethanolamine (PE) and PIP2. Involved in membrane lipid modulation under aluminum (Al) stress and negatively modulate plant tolerance to Al. This chain is Phospholipase D gamma 2, found in Arabidopsis thaliana (Mouse-ear cress).